The following is a 477-amino-acid chain: Aspartyl/glutamyl-tRNA(Asn/Gln) amidotransferase subunit B (477 aa).

Belongs to the GatB/GatE family. GatB subfamily. In terms of assembly, heterotrimer of A, B and C subunits.

The enzyme catalyses L-glutamyl-tRNA(Gln) + L-glutamine + ATP + H2O = L-glutaminyl-tRNA(Gln) + L-glutamate + ADP + phosphate + H(+). It carries out the reaction L-aspartyl-tRNA(Asn) + L-glutamine + ATP + H2O = L-asparaginyl-tRNA(Asn) + L-glutamate + ADP + phosphate + 2 H(+). Its function is as follows. Allows the formation of correctly charged Asn-tRNA(Asn) or Gln-tRNA(Gln) through the transamidation of misacylated Asp-tRNA(Asn) or Glu-tRNA(Gln) in organisms which lack either or both of asparaginyl-tRNA or glutaminyl-tRNA synthetases. The reaction takes place in the presence of glutamine and ATP through an activated phospho-Asp-tRNA(Asn) or phospho-Glu-tRNA(Gln). The protein is Aspartyl/glutamyl-tRNA(Asn/Gln) amidotransferase subunit B of Bdellovibrio bacteriovorus (strain ATCC 15356 / DSM 50701 / NCIMB 9529 / HD100).